A 250-amino-acid polypeptide reads, in one-letter code: Isoprenyl transferase (250 aa).

Asp27 is an active-site residue. Position 27 (Asp27) interacts with Mg(2+). Substrate-binding positions include 28–31 (GNRR), Trp32, His48, and 76–78 (STE). Asn79 (proton acceptor) is an active-site residue. Substrate contacts are provided by residues Phe80, Arg82, Arg199, and 205–207 (RVS). Position 218 (Glu218) interacts with Mg(2+).

This sequence belongs to the UPP synthase family. In terms of assembly, homodimer. Requires Mg(2+) as cofactor.

Catalyzes the condensation of isopentenyl diphosphate (IPP) with allylic pyrophosphates generating different type of terpenoids. This is Isoprenyl transferase from Chlamydia abortus (strain DSM 27085 / S26/3) (Chlamydophila abortus).